The sequence spans 413 residues: Putative tRNA pseudouridine synthase C16C4.06c (413 aa).

The active-site Nucleophile is D96. Y154 lines the substrate pocket.

This sequence belongs to the tRNA pseudouridine synthase TruA family.

The protein resides in the cytoplasm. Its subcellular location is the nucleus. It catalyses the reaction a uridine in tRNA = a pseudouridine in tRNA. This chain is Putative tRNA pseudouridine synthase C16C4.06c, found in Schizosaccharomyces pombe (strain 972 / ATCC 24843) (Fission yeast).